A 718-amino-acid polypeptide reads, in one-letter code: Catalase-peroxidase (718 aa).

The tryptophyl-tyrosyl-methioninium (Trp-Tyr) (with M-246) cross-link spans Trp92–Tyr220. The active-site Proton acceptor is the His93. Positions Tyr220–Met246 form a cross-link, tryptophyl-tyrosyl-methioninium (Tyr-Met) (with W-92). A heme b-binding site is contributed by His261.

It belongs to the peroxidase family. Peroxidase/catalase subfamily. In terms of assembly, homodimer or homotetramer. Heme b is required as a cofactor. Formation of the three residue Trp-Tyr-Met cross-link is important for the catalase, but not the peroxidase activity of the enzyme.

The catalysed reaction is H2O2 + AH2 = A + 2 H2O. The enzyme catalyses 2 H2O2 = O2 + 2 H2O. In terms of biological role, bifunctional enzyme with both catalase and broad-spectrum peroxidase activity. The protein is Catalase-peroxidase of Shewanella halifaxensis (strain HAW-EB4).